The chain runs to 553 residues: Vacuolar fusion protein MON1 homolog B (553 aa).

M1 bears the N-acetylmethionine mark. 2 disordered regions span residues 1–111 (MEAG…DEDW) and 534–553 (STPP…FTGL). The span at 23-35 (FPREEAGDSERVH) shows a compositional bias: basic and acidic residues. Residues 52–72 (KDQPSSLLSPLPQTEAASSTC) are compositionally biased toward polar residues. S57 bears the Phosphoserine mark. The span at 78–95 (AAASDSSPPGEPESNSEG) shows a compositional bias: low complexity. Over residues 96–108 (QGEDPDDGGDPSD) the composition is skewed to acidic residues. The segment covering 541–553 (ADQAPNNGLFTGL) has biased composition (polar residues).

The protein belongs to the MON1/SAND family. Interacts with CCNT2; down-regulates CCNT2-mediated activation of viral promoters during herpes simplex virus 1/HHV-1 infection. Found in a complex with RMC1, CCZ1 MON1A and MON1B.

This is Vacuolar fusion protein MON1 homolog B (Mon1b) from Mus musculus (Mouse).